Here is a 148-residue protein sequence, read N- to C-terminus: Small ribosomal subunit protein uS15 (148 aa).

It belongs to the universal ribosomal protein uS15 family.

In Encephalitozoon cuniculi (strain GB-M1) (Microsporidian parasite), this protein is Small ribosomal subunit protein uS15 (RPS13).